We begin with the raw amino-acid sequence, 563 residues long: Sperm-tail PG-rich repeat-containing protein 2 (563 aa).

STPGR repeat units follow at residues 21–34 (VGPG…PKQQ), 63–73 (PGPAHYNVSQA), and 97–107 (GPGPASYDCPY). The tract at residues 131–163 (IPSIPSSGKSHGYHLNEDDTIMRRTPPSSDKTM) is disordered. 7 STPGR repeats span residues 200 to 219 (GPGP…YENI), 250 to 263 (PGPG…QFDH), 292 to 321 (TPAP…FGQR), 334 to 353 (LPGP…QVKK), 423 to 438 (LPAP…YDMS), 473 to 483 (GPGPATYNPIL), and 507 to 518 (SPGPTTYELSPF).

The sequence is that of Sperm-tail PG-rich repeat-containing protein 2 (Stpg2) from Rattus norvegicus (Rat).